We begin with the raw amino-acid sequence, 614 residues long: Sodium- and chloride-dependent betaine transporter (614 aa).

Over 1-44 (MDRKVTVHEDGCPVVSWVPEEGEMMDQKDKDQVKDRGQWTNKME) the chain is Cytoplasmic. A run of 3 helical transmembrane segments spans residues 45–65 (FVLS…FPYL), 73–92 (AFFI…VFFL), and 117–137 (GIGM…IIIL). The Extracellular portion of the chain corresponds to 138 to 210 (AWALFYLFSS…SGIHDLGSLR (73 aa)). N-linked (GlcNAc...) asparagine glycosylation is found at asparagine 171 and asparagine 183. The next 9 helical transmembrane spans lie at 211 to 229 (WELA…FCIW), 238 to 255 (VVYF…ILLI), 291 to 308 (IFFS…LGSY), 320 to 341 (IALC…FSIL), 374 to 393 (MPLS…FLGL), 423 to 441 (LLIL…LLVT), 458 to 478 (GICL…VYGA), 499 to 518 (ISWL…FSLS), and 538 to 556 (IGWL…FIII). At 557–614 (TLLKTQGSFKKRLQRLITPDPSLPQPGRRSPQDGSSAQNCSTSPVKQELIAWEKETHL) the chain is on the cytoplasmic side. Residues 574–600 (TPDPSLPQPGRRSPQDGSSAQNCSTSP) form a disordered region. Residue serine 586 is modified to Phosphoserine. The segment covering 588-600 (QDGSSAQNCSTSP) has biased composition (polar residues).

It belongs to the sodium:neurotransmitter symporter (SNF) (TC 2.A.22) family. SLC6A12 subfamily. Interacts with LIN7C.

Its subcellular location is the basolateral cell membrane. It is found in the cell membrane. The catalysed reaction is 4-aminobutanoate(out) + chloride(out) + 3 Na(+)(out) = 4-aminobutanoate(in) + chloride(in) + 3 Na(+)(in). It catalyses the reaction glycine betaine(out) + 2 chloride(out) + 3 Na(+)(out) = glycine betaine(in) + 2 chloride(in) + 3 Na(+)(in). Its function is as follows. Transporter that mediates cellular uptake of betaine and GABA in a sodium- and chloride-dependent process. May have a role in regulation of GABAergic transmission in the brain through the reuptake of GABA into presynaptic terminals, as well as in osmotic regulation. Probably also involved in renal and hepatic osmotic regulation. This chain is Sodium- and chloride-dependent betaine transporter (Slc6a12), found in Rattus norvegicus (Rat).